The sequence spans 254 residues: Thiazole synthase (254 aa).

Lys96 (schiff-base intermediate with DXP) is an active-site residue. 1-deoxy-D-xylulose 5-phosphate contacts are provided by residues Gly157, 183–184, and 205–206; these read AG and NT.

Belongs to the ThiG family. In terms of assembly, homotetramer. Forms heterodimers with either ThiH or ThiS.

The protein resides in the cytoplasm. It catalyses the reaction [ThiS sulfur-carrier protein]-C-terminal-Gly-aminoethanethioate + 2-iminoacetate + 1-deoxy-D-xylulose 5-phosphate = [ThiS sulfur-carrier protein]-C-terminal Gly-Gly + 2-[(2R,5Z)-2-carboxy-4-methylthiazol-5(2H)-ylidene]ethyl phosphate + 2 H2O + H(+). It functions in the pathway cofactor biosynthesis; thiamine diphosphate biosynthesis. Its function is as follows. Catalyzes the rearrangement of 1-deoxy-D-xylulose 5-phosphate (DXP) to produce the thiazole phosphate moiety of thiamine. Sulfur is provided by the thiocarboxylate moiety of the carrier protein ThiS. In vitro, sulfur can be provided by H(2)S. The sequence is that of Thiazole synthase from Clostridium perfringens (strain 13 / Type A).